The primary structure comprises 156 residues: Small ribosomal subunit protein uS7 (156 aa).

Belongs to the universal ribosomal protein uS7 family. As to quaternary structure, part of the 30S ribosomal subunit. Contacts proteins S9 and S11.

Its function is as follows. One of the primary rRNA binding proteins, it binds directly to 16S rRNA where it nucleates assembly of the head domain of the 30S subunit. Is located at the subunit interface close to the decoding center, probably blocks exit of the E-site tRNA. The polypeptide is Small ribosomal subunit protein uS7 (Afipia carboxidovorans (strain ATCC 49405 / DSM 1227 / KCTC 32145 / OM5) (Oligotropha carboxidovorans)).